Consider the following 159-residue polypeptide: Nucleoside diphosphate kinase (159 aa).

ATP is bound by residues Lys-13, Phe-61, Arg-89, Thr-95, Arg-106, and Asn-116. His-119 serves as the catalytic Pros-phosphohistidine intermediate.

It belongs to the NDK family. It depends on Mg(2+) as a cofactor.

The protein resides in the cytoplasm. It catalyses the reaction a 2'-deoxyribonucleoside 5'-diphosphate + ATP = a 2'-deoxyribonucleoside 5'-triphosphate + ADP. It carries out the reaction a ribonucleoside 5'-diphosphate + ATP = a ribonucleoside 5'-triphosphate + ADP. Its function is as follows. Major role in the synthesis of nucleoside triphosphates other than ATP. The ATP gamma phosphate is transferred to the NDP beta phosphate via a ping-pong mechanism, using a phosphorylated active-site intermediate. The sequence is that of Nucleoside diphosphate kinase from Halorubrum lacusprofundi (strain ATCC 49239 / DSM 5036 / JCM 8891 / ACAM 34).